A 184-amino-acid chain; its full sequence is Adenylate kinase 2 (184 aa).

10-15 (GSGKST) is an ATP binding site. The NMP stretch occupies residues 30–59 (STGEILREAISHLSELGRHAQPYMIKGELV). AMP is bound by residues Thr-31, Arg-36, 57–59 (ELV), 85–88 (GYPR), and Gln-92. Positions 126 to 132 (GRSLPDD) are LID. ATP is bound at residue Arg-127. Arg-140 lines the AMP pocket. Gln-168 provides a ligand contact to ATP.

The protein belongs to the adenylate kinase family. In terms of assembly, monomer.

Its subcellular location is the cytoplasm. It catalyses the reaction AMP + ATP = 2 ADP. It functions in the pathway purine metabolism; AMP biosynthesis via salvage pathway; AMP from ADP: step 1/1. Functionally, catalyzes the reversible transfer of the terminal phosphate group between ATP and AMP. Plays an important role in cellular energy homeostasis and in adenine nucleotide metabolism. This chain is Adenylate kinase 2, found in Nostoc sp. (strain PCC 7120 / SAG 25.82 / UTEX 2576).